The sequence spans 505 residues: Maturase K (505 aa).

Belongs to the intron maturase 2 family. MatK subfamily.

The protein localises to the plastid. It localises to the chloroplast. In terms of biological role, usually encoded in the trnK tRNA gene intron. Probably assists in splicing its own and other chloroplast group II introns. This Morus indica (Mulberry) protein is Maturase K.